The sequence spans 473 residues: Arginine biosynthesis bifunctional protein ArgJ, mitochondrial (473 aa).

The substrate site is built by Thr-201, Lys-230, Thr-241, Glu-328, Asn-468, and Thr-473. Residue Thr-241 is the Nucleophile of the active site.

The protein belongs to the ArgJ family. In terms of assembly, heterodimer of an alpha and a beta chain. In terms of processing, the alpha and beta chains are autoproteolytically processed from a single precursor protein within the mitochondrion.

The protein resides in the mitochondrion matrix. The enzyme catalyses N(2)-acetyl-L-ornithine + L-glutamate = N-acetyl-L-glutamate + L-ornithine. It carries out the reaction L-glutamate + acetyl-CoA = N-acetyl-L-glutamate + CoA + H(+). It participates in amino-acid biosynthesis; L-arginine biosynthesis; L-ornithine and N-acetyl-L-glutamate from L-glutamate and N(2)-acetyl-L-ornithine (cyclic): step 1/1. The protein operates within amino-acid biosynthesis; L-arginine biosynthesis; N(2)-acetyl-L-ornithine from L-glutamate: step 1/4. Catalyzes two activities which are involved in the cyclic version of arginine biosynthesis: the synthesis of acetylglutamate from glutamate and acetyl-CoA, and of ornithine by transacetylation between acetylornithine and glutamate. In Paracoccidioides lutzii (strain ATCC MYA-826 / Pb01) (Paracoccidioides brasiliensis), this protein is Arginine biosynthesis bifunctional protein ArgJ, mitochondrial.